The sequence spans 268 residues: Glucosamine-6-phosphate deaminase (268 aa).

Asp-67 serves as the catalytic Proton acceptor; for enolization step. Asn-137 (for ring-opening step) is an active-site residue. The Proton acceptor; for ring-opening step role is filled by His-139. Residue Glu-144 is the For ring-opening step of the active site.

The protein belongs to the glucosamine/galactosamine-6-phosphate isomerase family. NagB subfamily. In terms of assembly, homohexamer.

The enzyme catalyses alpha-D-glucosamine 6-phosphate + H2O = beta-D-fructose 6-phosphate + NH4(+). Its pathway is amino-sugar metabolism; N-acetylneuraminate degradation; D-fructose 6-phosphate from N-acetylneuraminate: step 5/5. Its function is as follows. Catalyzes the reversible isomerization-deamination of glucosamine 6-phosphate (GlcN6P) to form fructose 6-phosphate (Fru6P) and ammonium ion. This is Glucosamine-6-phosphate deaminase from Pseudoalteromonas translucida (strain TAC 125).